Here is a 329-residue protein sequence, read N- to C-terminus: D-alanine--D-alanine ligase (329 aa).

The 207-residue stretch at Lys-121 to Thr-327 folds into the ATP-grasp domain. Ala-151–Glu-206 is an ATP binding site. Positions 281, 294, and 296 each coordinate Mg(2+).

The protein belongs to the D-alanine--D-alanine ligase family. Mg(2+) is required as a cofactor. Requires Mn(2+) as cofactor.

Its subcellular location is the cytoplasm. It catalyses the reaction 2 D-alanine + ATP = D-alanyl-D-alanine + ADP + phosphate + H(+). Its pathway is cell wall biogenesis; peptidoglycan biosynthesis. Cell wall formation. The protein is D-alanine--D-alanine ligase of Vibrio cholerae serotype O1 (strain ATCC 39541 / Classical Ogawa 395 / O395).